A 159-amino-acid polypeptide reads, in one-letter code: Large ribosomal subunit protein uL30 (159 aa).

This sequence belongs to the universal ribosomal protein uL30 family. Part of the 50S ribosomal subunit.

The protein is Large ribosomal subunit protein uL30 of Aeropyrum pernix (strain ATCC 700893 / DSM 11879 / JCM 9820 / NBRC 100138 / K1).